The chain runs to 32 residues: Delta-conotoxin-like CnVID (32 aa).

3 disulfide bridges follow: cysteine 3–cysteine 18, cysteine 10–cysteine 22, and cysteine 17–cysteine 27. 4-hydroxyproline is present on residues proline 6 and proline 14.

This sequence belongs to the conotoxin O1 superfamily. Expressed by the venom duct.

It is found in the secreted. In terms of biological role, delta-conotoxins bind to site 6 of voltage-gated sodium channels (Nav) and inhibit the inactivation process. This toxin acts on Nav1.2/SCN2A, Nav1.3/SCN3A and Nav1.6/SCN8A (EC(50)=1.7 uM). This is Delta-conotoxin-like CnVID from Conus consors (Singed cone).